The sequence spans 503 residues: GMP synthase [glutamine-hydrolyzing] (503 aa).

Positions 3 to 189 (PVLVVDFGSQ…AFLSSFAAPN (187 aa)) constitute a Glutamine amidotransferase type-1 domain. Cys-80 (nucleophile) is an active-site residue. Catalysis depends on residues His-165 and Glu-167. A GMPS ATP-PPase domain is found at 190–380 (WDPEQTICGT…LGIPKHIVHR (191 aa)). 217–223 (SGGVDSV) serves as a coordination point for ATP.

In terms of assembly, homodimer.

The catalysed reaction is XMP + L-glutamine + ATP + H2O = GMP + L-glutamate + AMP + diphosphate + 2 H(+). Its pathway is purine metabolism; GMP biosynthesis; GMP from XMP (L-Gln route): step 1/1. Its function is as follows. Catalyzes the synthesis of GMP from XMP. This is GMP synthase [glutamine-hydrolyzing] from Tropheryma whipplei (strain Twist) (Whipple's bacillus).